We begin with the raw amino-acid sequence, 2130 residues long: MKAGVLSGTSACHTFDTSADGYGRADGIGALYVKRLEDALRDGDPIRSLIRGSAVNANGKTSGISLPSADGQEAVIQKAMAKGGIVPDDITFVECHGTGTKVGDAIEVEALSRVFQRTPNNPLMIGSVKSNVGHSEAASGISSVIKSTLALERGQIPPTHGLKNINPKLKVEDRNIKIPTELTNWPNHSSRVRRVGINSFGYGGANCHVILEQPTKTLSSSRQLRQLPITQSTVILPLSAASTASLEARVADFARYEFGDTDIADLAYTLGSRRTHFAERGFLLAPRSQEISHSFQTRTWVTSASPVTGVASTPFAFVFTGQGSQWPGMCRELLSEFSLFRDTITEMDSVLKSLPGPPSWSLMEAILDVDNPSLIHLPQRSQPCCTAIQVALIRLLSSWEIAPTMTVGHSSGEIAAAFAAGHVSAAEAIVIAYYRGYCVSKSTRVGAMMAIGLSESSTTDEIAKAGLDDQIRVACVNSPEGVTVSGDENALDIFLATLQQRNIFARKLKTGGQAYHSHHMVSIGEEYQALLERALPSLGPSIRQPQGASVMSSVTGELKSSGFTASYWRSNLESQVRFAHAIERIHELTEHCFIELGPHSSLELPIKQTLAKAGAELKYAAPIKRNVDSMESILSFAGNLWLKGYEINWSKVNGLQTGLKSVRSMYRVVTDLPPYRFNYENILWNECRASVEYRQRKYPHHELLGSLLTGGNARDKIFRNILKVDDVSWLKDHKLGDTVVFPGAGYLAMAMEAVMQATDAARTDPTFQFSNVNITNALTLNTEFSTSAEIFTSLHKSVITNAATSATWWDFAISSYHNGSAVQHASGSIAIHPRNAALQSKYKPPSGALESTAKRTWYEKFIRQGLNYGPTFQTISEFYTPRMKSESFASATAPLLKTSGDSISVYPVHPIALDGMIQLAVVAATNGKPKELRAQIPTRLPSAIVHTSTSSNQTCQMHAVVKRIGFGYTHAGIEMIDSDGQIVAQFDDIRLSPYQSTSQADIEDKRHPVLRVLWKPDIYGLGLMAMDDAQHHVQKFADEAHSPVSGPLLKMGAMLDLLAHKNPRLRILEIGNDVQDITLAVLGLLSAQGSFKRLSAYSTASVSDDGTILGGLLNLETGERCSSPTELDHEYDLILLPAMNEHIDRAVDTFGGLMADDASILALCPGLTSNSFASRGLDCLPVRLSEDGTTLIVARKPQELQQVSLQRHKFLIVEREKTALGSALADTLKPIQGQWVMRVRLNELTPAHVSSGTTIFNLCEIKSPLLSVISDDEMARVKVMTDNATLLVWVTNGNIMHGDRPDFALVSGLARALMLEQPSLKLYTYDIDEPETQIHMTAKRLVSLLTQPGKKPDLEFAQRKGVVHVSRFTPDDSINTLFRNKQGLETTESSLHDAKDVRLAIEQAGQLDTIYFQQLKAPQTIGPTDLRIRVASVGLNAKDYYVLVGRVDTPDATCQLECAGTVEQVGSLVTDFAPGDRVVAMAPSHFQTYQTLPQWACHKLTDAESFDISATLPIVYATAIYALHYRAHIQAGETVLIHSGAGGVGIAAIQLALHAGAEVFTTVSSDEKKKFLVDKLGVKASNIFSSRDTSFLEGIFSATSGRGVDVILNSLTGDQLHATWRCCAAFGRFVEIGKMDLTTAGRLEMDQFLQSTTFTAFDLSHLYHTDSEQLHSLWNDLLSQVMKLYRQGTITAFEPLNIFDIGETEQAFRYFSSRSRIGKVAINLERAESTIPIQPLRHTTQFDSEKSYVMVGCLGGLGRTLSRWMVNRGARKFTFLGRSGIDKAAARHLVQDLEASGARCEVVRGDVCEASDVEAVITAAAAMGEIGGVVQAAMGLNEAIFSVMPNEYWHTGIDPKVQGSWNLYNSLQMHGRGSHLDFFLMTSSVSGSVGTATESNYCAANHFLDQFSRFLRNQGYPAVAVGLGMISEVGYLHDNPEIEALLLRKGIQAIDADELLQLIDLALSSSATMGISHAHDELAASHLLTGLEAFGLKELRKRGFEGSHPALDDPRANLLASALDGGSDESSQAQNGSLPAEVTTLMQSGHTLDEAVLDHIRRRFGNLVLLKYEVVDVKKPLLQYGMDSMIGAEFRTWFYQSLTTDVPLVMLLGSSCTLESLRDLAMTSLEVGKS.

The region spanning 1-213 (MKAGVLSGTS…GANCHVILEQ (213 aa)) is the Ketosynthase family 3 (KS3) domain. Positions 317 to 644 (FVFTGQGSQW…SFAGNLWLKG (328 aa)) constitute a Malonyl-CoA:ACP transacylase (MAT) domain. An N-terminal hotdog fold region spans residues 701-836 (HELLGSLLTG…GSIAIHPRNA (136 aa)). A PKS/mFAS DH domain is found at 701-1000 (HELLGSLLTG…LSPYQSTSQA (300 aa)). His733 serves as the catalytic Proton acceptor; for dehydratase activity. Residues 849 to 1000 (LESTAKRTWY…LSPYQSTSQA (152 aa)) form a C-terminal hotdog fold region. Asp914 functions as the Proton donor; for dehydratase activity in the catalytic mechanism. The Enoyl reductase (ER) domain maps to 1405 to 1722 (GQLDTIYFQQ…SRSRIGKVAI (318 aa)). A Ketoreductase (KR) domain is found at 1747–1927 (SYVMVGCLGG…AVAVGLGMIS (181 aa)). The region spanning 2047–2125 (TLDEAVLDHI…SLRDLAMTSL (79 aa)) is the Carrier domain. Ser2084 is subject to O-(pantetheine 4'-phosphoryl)serine.

It depends on pantetheine 4'-phosphate as a cofactor.

Its pathway is secondary metabolite biosynthesis. Highly reducing polyketide synthase; part of the gene cluster that mediates the biosynthesis of annullatin D, an alkylated aromatic polyketide with a fused dihydrobenzofuran lactone ring system that exhibits potent agonistic activities toward the cannabinoid receptors. The annullatin backbone 2-hydroxymethyl-3-pentylphenol is assembled from one acetyl-CoA starter unit and 5 malonyl-CoA elongation units by cooperation of the highly reducing polyketide synthase anuA, the short-chain dehydrogenase anuB and the oxidoreductase anuC, before being hydroxylated at the C-5 alkyl chain by the cytochrome P450 monooxygenase anuE to form (8S)-annullatin E. The prenyltransferase anuH subsequently installs one isoprenyl group at the benzene ring to form (8S)-annullatin J. Enzymatic or nonenzymatic dihydro-benzofuran ring formation between the prenyl and the phenolic hydroxyl groups in (8S)-annullatin J results in two diastereomers (2S,9S)-annullatin H and compound 12. The intermediate (2S,9S)-annullatin H is then converted to (2S,9S)-annullatin D by the FAD-linked oxidoreductase anuG-catalyzed five-member lactone ring formation. The isomer 12 acts as a substrate for the short-chain dehydrogenase anuF and is oxidized to (2R)-annullatin F, which is subsequently acetylated by an acetyltransferase leading to (2R)-annullatin G formation. The remaining enzymes identified within the cluster, anuD, anuI and anuJ, seem not to be involved in annullatin biosynthesis. This is Highly reducing polyketide synthase anuA from Penicillium roqueforti (strain FM164).